The following is a 447-amino-acid chain: uncharacterized protein (447 aa).

This is an uncharacterized protein from Mus musculus (Mouse).